The chain runs to 78 residues: Translational regulator CsrA (78 aa).

Belongs to the CsrA/RsmA family. As to quaternary structure, homodimer; the beta-strands of each monomer intercalate to form a hydrophobic core, while the alpha-helices form wings that extend away from the core.

The protein localises to the cytoplasm. A translational regulator that binds mRNA to regulate translation initiation and/or mRNA stability. Usually binds in the 5'-UTR at or near the Shine-Dalgarno sequence preventing ribosome-binding, thus repressing translation. Its main target seems to be the major flagellin gene, while its function is anatagonized by FliW. The protein is Translational regulator CsrA of Desulfotalea psychrophila (strain LSv54 / DSM 12343).